A 149-amino-acid polypeptide reads, in one-letter code: Calmodulin-3 (149 aa).

A2 is subject to N-acetylalanine. 4 consecutive EF-hand domains span residues 8-43 (DQIA…LGQN), 44-79 (PTEA…KMKD), 81-116 (DSEE…LGEK), and 117-149 (LTDE…MMAK). Residues D21, D23, D25, C27, E32, D57, D59, N61, T63, E68, D94, D96, N98, and E105 each coordinate Ca(2+). K116 carries the post-translational modification N6,N6,N6-trimethyllysine. Ca(2+) contacts are provided by D130, D132, D134, Q136, and E141.

This sequence belongs to the calmodulin family.

In terms of biological role, calmodulin mediates the control of a large number of enzymes, ion channels and other proteins by Ca(2+). Among the enzymes to be stimulated by the calmodulin-Ca(2+) complex are a number of protein kinases and phosphatases. This is Calmodulin-3 (CAM3) from Oryza sativa subsp. japonica (Rice).